A 458-amino-acid polypeptide reads, in one-letter code: Histidine--tRNA ligase (458 aa).

It belongs to the class-II aminoacyl-tRNA synthetase family. Homodimer.

The protein resides in the cytoplasm. The enzyme catalyses tRNA(His) + L-histidine + ATP = L-histidyl-tRNA(His) + AMP + diphosphate + H(+). The sequence is that of Histidine--tRNA ligase from Micrococcus luteus (strain ATCC 4698 / DSM 20030 / JCM 1464 / CCM 169 / CCUG 5858 / IAM 1056 / NBRC 3333 / NCIMB 9278 / NCTC 2665 / VKM Ac-2230) (Micrococcus lysodeikticus).